Here is a 460-residue protein sequence, read N- to C-terminus: Probable serine/threonine-protein kinase kinase DDB_G0280557 (460 aa).

The Protein kinase domain maps to 102–416; the sequence is INLKSITDCG…IDQLLAHKYF (315 aa). ATP-binding positions include K131 and 154-162; that span reads QRHFQQHPL. Residue D250 is the Proton acceptor of the active site.

The protein belongs to the protein kinase superfamily. CMGC Ser/Thr protein kinase family. MAP kinase subfamily.

It carries out the reaction L-seryl-[protein] + ATP = O-phospho-L-seryl-[protein] + ADP + H(+). The enzyme catalyses L-threonyl-[protein] + ATP = O-phospho-L-threonyl-[protein] + ADP + H(+). This Dictyostelium discoideum (Social amoeba) protein is Probable serine/threonine-protein kinase kinase DDB_G0280557.